Consider the following 357-residue polypeptide: MDRYGHNVRSDIKKQGYEDSNLPILCETCLGENPYVRIIREENGKECKICKNVFTHFRWKPGENSRYKQTVICMKCAKVKNVCQTCLFDLQYNLPVQVRDKFLENSIVLPENETNRNFFLEQMENDMSSTYDKMNRINMDLSKLKRRDPYFKRNMARVCSFWRKNSCNRGDECPYLHKEIHLDKSLSNQNIKNRYTGENDILAEKILLKHNEKNNDDKNMSNKICIQGISESVSQANIKECFKKFGDIKSIKVIPKDSKMFISYSNSQAAKKASDKYKDGLLLNGCNLTVHLQDNPTYNNKNQQPVINYMNNNMYQNNMSPQMMYNPMYYPYYNMNNMHPSSAPYSSMLPSEAEQRK.

Residues 153 to 180 (RNMARVCSFWRKNSCNRGDECPYLHKEI) form a C3H1-type zinc finger. The RRM domain maps to 222-295 (NKICIQGISE…CNLTVHLQDN (74 aa)).

It belongs to the SLT11 family. Probable component of the spliceosome C complex.

Its subcellular location is the nucleus. Its function is as follows. Involved in pre-mRNA splicing. Binds RNA. The protein is Pre-mRNA-splicing factor RBM22 homolog of Plasmodium falciparum (isolate 3D7).